Here is a 201-residue protein sequence, read N- to C-terminus: Small ribosomal subunit protein uS4c (201 aa).

Residues 89–150 (MRLDNILFRL…KERSKALIQN (62 aa)) enclose the S4 RNA-binding domain.

Belongs to the universal ribosomal protein uS4 family. In terms of assembly, part of the 30S ribosomal subunit. Contacts protein S5. The interaction surface between S4 and S5 is involved in control of translational fidelity.

The protein localises to the plastid. The protein resides in the chloroplast. Its function is as follows. One of the primary rRNA binding proteins, it binds directly to 16S rRNA where it nucleates assembly of the body of the 30S subunit. In terms of biological role, with S5 and S12 plays an important role in translational accuracy. In Phalaenopsis aphrodite subsp. formosana (Moth orchid), this protein is Small ribosomal subunit protein uS4c (rps4).